The primary structure comprises 489 residues: Metalloreductase STEAP2 (489 aa).

Residues 37 to 40, 59 to 60, 92 to 99, Asn117, and Ala150 each bind NADP(+); these read SGDF, SR, and IHREHYTS. Trp151 and Asp159 together coordinate FAD. The helical transmembrane segment at 207–227 threads the bilayer; it reads LFTLWRGPVVVAISLATFFFL. Tyr228 lines the Fe(3+) pocket. The helical transmembrane segment at 258–278 threads the bilayer; sequence LPIVAITLLSLVYLAGLLAAA. The Ferric oxidoreductase domain occupies 258 to 406; sequence LPIVAITLLS…LGYVALLITT (149 aa). FAD-binding residues include Gln280 and Arg301. A run of 4 helical transmembrane segments spans residues 304-324, 358-378, 392-412, and 431-451; these read LGLL…CLPM, MYIS…VTSI, FIQS…VLIY, and FVLA…LLLP. His315 serves as a coordination point for heme b. Tyr318 lines the Fe(3+) pocket. Residues Ser377 and Gln394 each coordinate FAD. His408 contacts heme b. Ser482 is modified (phosphoserine).

This sequence belongs to the STEAP family. FAD serves as cofactor. It depends on heme b as a cofactor.

Its subcellular location is the cell membrane. It is found in the endosome membrane. The catalysed reaction is 2 Fe(2+) + NADP(+) + H(+) = 2 Fe(3+) + NADPH. It carries out the reaction 2 Cu(+) + NADP(+) + H(+) = 2 Cu(2+) + NADPH. In terms of biological role, integral membrane protein that functions as a NADPH-dependent ferric-chelate reductase, using NADPH from one side of the membrane to reduce a Fe(3+) chelate that is bound on the other side of the membrane. Mediates sequential transmembrane electron transfer from NADPH to FAD and onto heme, and finally to the Fe(3+) chelate. Can also reduce Cu(2+) to Cu(1+). This is Metalloreductase STEAP2 (Steap2) from Mus musculus (Mouse).